The chain runs to 431 residues: Probable sodium/metabolite cotransporter BASS3, chloroplastic (431 aa).

The transit peptide at M1–V70 directs the protein to the chloroplast. A run of 9 helical transmembrane segments spans residues F110–P130, L145–F165, V169–V189, T198–A218, I238–V258, V261–L281, V288–I308, L325–F345, and V387–W407.

This sequence belongs to the bile acid:sodium symporter (BASS) (TC 2.A.28) family.

Its subcellular location is the membrane. The protein localises to the plastid. It is found in the chloroplast envelope. Functionally, may function as sodium-coupled metabolite transporter across the chloroplast envelope. The polypeptide is Probable sodium/metabolite cotransporter BASS3, chloroplastic (BASS3) (Arabidopsis thaliana (Mouse-ear cress)).